Reading from the N-terminus, the 476-residue chain is MTWETVIGLEIHVQLNTKSKIFSGASTAFGAEPNAHASVVECALPGVLPVMNREVVEKAIKLGLALDAKINRKNVFDRKNYFYPDLPKGYQISQLDLPIVEHGKLEIVVGGDVKTINVTRAHMEEDAGKSVHEGLNGATGIDLNRAGTPLLEVVSEPEMRSAAEAVAYAKALHSLVTWLDICDGNMAEGSFRIDANVSVRPKGQAEFGTRREIKNLNSFRFLDQAINYEAEAQIEILEDGGTVQQATMLFDPEKGETRVMRLKEDAHDYGYFPDPDLLPVIISDAQMQKAKAEMPELPKEMAARFVADYGVSEYDARLLTASRVQAAYFEEAAKESGQGKPTANWMNGELAATLNKEGMELADSPITAPRLAALVGKIADGTLSGKLAKKAFEAMWAEPETSIAEIIEKHSLQQMTDTGAVEAMVDEVLANNAKAVEQFKSGNEKALNAIVGQVMKTSKGKANPAQVQELIKAKLA.

It belongs to the GatB/GatE family. GatB subfamily. In terms of assembly, heterotrimer of A, B and C subunits.

The enzyme catalyses L-glutamyl-tRNA(Gln) + L-glutamine + ATP + H2O = L-glutaminyl-tRNA(Gln) + L-glutamate + ADP + phosphate + H(+). It carries out the reaction L-aspartyl-tRNA(Asn) + L-glutamine + ATP + H2O = L-asparaginyl-tRNA(Asn) + L-glutamate + ADP + phosphate + 2 H(+). Allows the formation of correctly charged Asn-tRNA(Asn) or Gln-tRNA(Gln) through the transamidation of misacylated Asp-tRNA(Asn) or Glu-tRNA(Gln) in organisms which lack either or both of asparaginyl-tRNA or glutaminyl-tRNA synthetases. The reaction takes place in the presence of glutamine and ATP through an activated phospho-Asp-tRNA(Asn) or phospho-Glu-tRNA(Gln). The chain is Aspartyl/glutamyl-tRNA(Asn/Gln) amidotransferase subunit B from Neisseria gonorrhoeae (strain ATCC 700825 / FA 1090).